The primary structure comprises 352 residues: GTPase Obg (352 aa).

The 159-residue stretch at 1-159 (MHFLDQAKIF…MYVWLRLKLL (159 aa)) folds into the Obg domain. The segment at 122–142 (DGGRGNASYKTSTNRAPRQHG) is disordered. The OBG-type G domain occupies 160–328 (ADAGLVGLPN…LLDAVLEYLP (169 aa)). GTP contacts are provided by residues 166 to 173 (GLPNAGKS), 191 to 195 (FTTLR), 212 to 215 (DIPG), 280 to 283 (NKID), and 309 to 311 (SGA). 2 residues coordinate Mg(2+): serine 173 and threonine 193.

This sequence belongs to the TRAFAC class OBG-HflX-like GTPase superfamily. OBG GTPase family. As to quaternary structure, monomer. The cofactor is Mg(2+).

It localises to the cytoplasm. In terms of biological role, an essential GTPase which binds GTP, GDP and possibly (p)ppGpp with moderate affinity, with high nucleotide exchange rates and a fairly low GTP hydrolysis rate. Plays a role in control of the cell cycle, stress response, ribosome biogenesis and in those bacteria that undergo differentiation, in morphogenesis control. The polypeptide is GTPase Obg (Novosphingobium aromaticivorans (strain ATCC 700278 / DSM 12444 / CCUG 56034 / CIP 105152 / NBRC 16084 / F199)).